Consider the following 276-residue polypeptide: MSELCMSTPISVIVVGALGKMGREVVKAVHQAPDTALYAAVDRKQVGEDIGEALGLGTLEIPISGSLQEVCVAAAQEKQPVVMVDFTHPQAVYENVRMAIAYGVYPVVGTTGLSPEQIEELAEFADKADMGAVIAPNFSIGMVLLQEAAIRASQYFDHVEIIELHHNQKADAPSGTALQTAQRLAELGKTFNPPQVQESEHLRGARGAFAAAEIRIHSVRLPGLIAHQEVIFGAPGQIYTLRHDTSDRQCYMPGVLLAIRKVRQLKRLIYGLEKLL.

16–21 (GALGKM) is a binding site for NAD(+). An NADP(+)-binding site is contributed by K44. NAD(+)-binding positions include 109–111 (GTT) and 135–138 (APNF). H165 (proton donor/acceptor) is an active-site residue. H166 provides a ligand contact to (S)-2,3,4,5-tetrahydrodipicolinate. K169 serves as the catalytic Proton donor. 175–176 (GT) contacts (S)-2,3,4,5-tetrahydrodipicolinate.

Belongs to the DapB family.

The protein localises to the cytoplasm. The enzyme catalyses (S)-2,3,4,5-tetrahydrodipicolinate + NAD(+) + H2O = (2S,4S)-4-hydroxy-2,3,4,5-tetrahydrodipicolinate + NADH + H(+). It carries out the reaction (S)-2,3,4,5-tetrahydrodipicolinate + NADP(+) + H2O = (2S,4S)-4-hydroxy-2,3,4,5-tetrahydrodipicolinate + NADPH + H(+). It functions in the pathway amino-acid biosynthesis; L-lysine biosynthesis via DAP pathway; (S)-tetrahydrodipicolinate from L-aspartate: step 4/4. Its function is as follows. Catalyzes the conversion of 4-hydroxy-tetrahydrodipicolinate (HTPA) to tetrahydrodipicolinate. This Thermosynechococcus vestitus (strain NIES-2133 / IAM M-273 / BP-1) protein is 4-hydroxy-tetrahydrodipicolinate reductase.